The primary structure comprises 341 residues: Heat-inducible transcription repressor HrcA (341 aa).

The protein belongs to the HrcA family.

Negative regulator of class I heat shock genes (grpE-dnaK-dnaJ and groELS operons). Prevents heat-shock induction of these operons. In Corynebacterium jeikeium (strain K411), this protein is Heat-inducible transcription repressor HrcA.